The primary structure comprises 145 residues: D-aminoacyl-tRNA deacylase (145 aa).

The short motif at 137–138 (GP) is the Gly-cisPro motif, important for rejection of L-amino acids element.

Belongs to the DTD family. As to quaternary structure, homodimer.

It localises to the cytoplasm. It carries out the reaction glycyl-tRNA(Ala) + H2O = tRNA(Ala) + glycine + H(+). It catalyses the reaction a D-aminoacyl-tRNA + H2O = a tRNA + a D-alpha-amino acid + H(+). An aminoacyl-tRNA editing enzyme that deacylates mischarged D-aminoacyl-tRNAs. Also deacylates mischarged glycyl-tRNA(Ala), protecting cells against glycine mischarging by AlaRS. Acts via tRNA-based rather than protein-based catalysis; rejects L-amino acids rather than detecting D-amino acids in the active site. By recycling D-aminoacyl-tRNA to D-amino acids and free tRNA molecules, this enzyme counteracts the toxicity associated with the formation of D-aminoacyl-tRNA entities in vivo and helps enforce protein L-homochirality. This chain is D-aminoacyl-tRNA deacylase, found in Stutzerimonas stutzeri (strain A1501) (Pseudomonas stutzeri).